Here is a 311-residue protein sequence, read N- to C-terminus: HPr kinase/phosphorylase (311 aa).

Active-site residues include H139 and K160. Position 154–161 (154–161) interacts with ATP; it reads GDSGVGKS. S161 contacts Mg(2+). D178 serves as the catalytic Proton acceptor; for phosphorylation activity. Proton donor; for dephosphorylation activity. Residues 202–211 are important for the catalytic mechanism of both phosphorylation and dephosphorylation; sequence LEIRGIGIID. E203 is a binding site for Mg(2+). The active site involves R244. The tract at residues 265–270 is important for the catalytic mechanism of dephosphorylation; that stretch reads PVKTGR.

It belongs to the HPrK/P family. Homohexamer. It depends on Mg(2+) as a cofactor.

It carries out the reaction [HPr protein]-L-serine + ATP = [HPr protein]-O-phospho-L-serine + ADP + H(+). The catalysed reaction is [HPr protein]-O-phospho-L-serine + phosphate + H(+) = [HPr protein]-L-serine + diphosphate. Functionally, catalyzes the ATP- as well as the pyrophosphate-dependent phosphorylation of a specific serine residue in HPr, a phosphocarrier protein of the phosphoenolpyruvate-dependent sugar phosphotransferase system (PTS). HprK/P also catalyzes the pyrophosphate-producing, inorganic phosphate-dependent dephosphorylation (phosphorolysis) of seryl-phosphorylated HPr (P-Ser-HPr). The two antagonistic activities of HprK/P are regulated by several intracellular metabolites, which change their concentration in response to the absence or presence of rapidly metabolisable carbon sources (glucose, fructose, etc.) in the growth medium. Therefore, by controlling the phosphorylation state of HPr, HPrK/P is a sensor enzyme that plays a major role in the regulation of carbon metabolism and sugar transport: it mediates carbon catabolite repression (CCR), and regulates PTS-catalyzed carbohydrate uptake and inducer exclusion. In Levilactobacillus brevis (strain ATCC 367 / BCRC 12310 / CIP 105137 / JCM 1170 / LMG 11437 / NCIMB 947 / NCTC 947) (Lactobacillus brevis), this protein is HPr kinase/phosphorylase.